We begin with the raw amino-acid sequence, 149 residues long: Large ribosomal subunit protein uL24 (149 aa).

It belongs to the universal ribosomal protein uL24 family. Part of the 50S ribosomal subunit.

Its function is as follows. One of two assembly initiator proteins, it binds directly to the 5'-end of the 23S rRNA, where it nucleates assembly of the 50S subunit. Functionally, located at the polypeptide exit tunnel on the outside of the subunit. This Hyperthermus butylicus (strain DSM 5456 / JCM 9403 / PLM1-5) protein is Large ribosomal subunit protein uL24.